The sequence spans 487 residues: Sugar transporter ERD6-like 6 (487 aa).

The residue at position 2 (Ser-2) is an N-acetylserine. 12 helical membrane passes run 46–66, 89–109, 115–135, 146–166, 178–198, 201–221, 284–304, 320–340, 347–367, 389–409, 425–445, and 451–471; these read ISVLACVLIVALGPIQFGFTC, VFGSLSNVGAMVGAIASGQIA, KGSLMIAAIPNIIGWLCISFA, LLEGFGVGIISYTVPVYIAEI, VNQLSVTIGIMLAYLLGLFVP, ILAVLGILPCTLLIPGLFFIP, LMVGIGLLVLQQLGGINGVLF, AATFGVGAIQVVATAISTWLV, LLLTISSVGMTISLVIVAAAF, VGVVAMVVFFSLGMGPIPWLI, IATLANWFFSWLITMTANLLL, and GTFTLYGLVCAFTVVFVTLWV.

The protein belongs to the major facilitator superfamily. Sugar transporter (TC 2.A.1.1) family.

The protein resides in the membrane. Sugar transporter. The sequence is that of Sugar transporter ERD6-like 6 from Arabidopsis thaliana (Mouse-ear cress).